The sequence spans 457 residues: MTTIKLHNSKTRKKEVFTPIDPDNVQMYVCGPTVYDRAHLGNARPVVVFDVLFRLLRHVYGDKKVTYARNFTDVDDKINTRAAESGRAIGEITSETIQWFLEDMGALGALQPTHMPRATEYIPQMIAMIEELIARDHAYEAEGHVLFAVDSWREGYGQLSGRSVDDMIAGARVEVAPYKKNPMDFVLWKPSDADQPGWESPWGRGRPGWHIECSAMSHDLLGESFDIHCGGNDLMFPHHENEIAQSCCANPEGEFARYWLHNEMLQVEGKKMSKSLGNFFTVRDLLDQGIPGEVVRFVFLQTHYRKPMDWTEKKAAEAEATLRKWRALTAGIEPAATAAAAVVDALSDDLNTAGAIAEMHKLAAAGDGAGLLAAGQLVGLLGDEMGEWAAAPSVDLSAHEARLFKARQAAMETKDFSEVDRLKAAYTEAGLEVRMSKTGVELVPGAGFDAAKLEALS.

Residue Cys-30 participates in Zn(2+) binding. The 'HIGH' region signature appears at 32–42; the sequence is PTVYDRAHLGN. Zn(2+)-binding residues include Cys-213, His-238, and Glu-242. Residues 271–275 carry the 'KMSKS' region motif; it reads KMSKS. Residue Lys-274 participates in ATP binding.

The protein belongs to the class-I aminoacyl-tRNA synthetase family. As to quaternary structure, monomer. Zn(2+) serves as cofactor.

Its subcellular location is the cytoplasm. The catalysed reaction is tRNA(Cys) + L-cysteine + ATP = L-cysteinyl-tRNA(Cys) + AMP + diphosphate. In Ruegeria sp. (strain TM1040) (Silicibacter sp.), this protein is Cysteine--tRNA ligase.